A 1299-amino-acid polypeptide reads, in one-letter code: DNA-directed RNA polymerase subunit beta' (1299 aa).

Zn(2+)-binding residues include C60, C62, C75, and C78. Mg(2+) is bound by residues D535, D537, and D539. The Zn(2+) site is built by C877, C954, C961, and C964.

This sequence belongs to the RNA polymerase beta' chain family. In terms of assembly, the RNAP catalytic core consists of 2 alpha, 1 beta, 1 beta' and 1 omega subunit. When a sigma factor is associated with the core the holoenzyme is formed, which can initiate transcription. Requires Mg(2+) as cofactor. The cofactor is Zn(2+).

It carries out the reaction RNA(n) + a ribonucleoside 5'-triphosphate = RNA(n+1) + diphosphate. Its function is as follows. DNA-dependent RNA polymerase catalyzes the transcription of DNA into RNA using the four ribonucleoside triphosphates as substrates. This chain is DNA-directed RNA polymerase subunit beta', found in Renibacterium salmoninarum (strain ATCC 33209 / DSM 20767 / JCM 11484 / NBRC 15589 / NCIMB 2235).